The following is a 137-amino-acid chain: Large ribosomal subunit protein uL16 (137 aa).

The protein belongs to the universal ribosomal protein uL16 family. As to quaternary structure, part of the 50S ribosomal subunit.

Functionally, binds 23S rRNA and is also seen to make contacts with the A and possibly P site tRNAs. The chain is Large ribosomal subunit protein uL16 from Stenotrophomonas maltophilia (strain K279a).